The following is an 877-amino-acid chain: EF-hand domain-containing family member B (877 aa).

Disordered regions lie at residues 1 to 47 and 268 to 290; these read MCSF…GRKS and AQQP…PDRI. EF-hand domains follow at residues 605–640 and 641–676; these read QNFD…ACLH and LDEK…KDKT. Residues Asp-618, Asp-622, Glu-629, Asp-654, Asp-656, Asp-658, and Glu-665 each coordinate Ca(2+).

Microtubule inner protein component of sperm flagellar doublet microtubules. Interacts with STIM1 and ORAI1; the interactions take place upon Ca(2+)-store depletion and dissociate through a Ca(2+)-dependent mechanism. Interaction with STIM1 inhibits STIM1 interaction with SARAF. As to expression, expressed in trachea multiciliated cells.

It is found in the cytoplasm. Its subcellular location is the cytoskeleton. It localises to the cilium axoneme. The protein resides in the flagellum axoneme. Microtubule inner protein (MIP) part of the dynein-decorated doublet microtubules (DMTs) in cilia axoneme, which is required for motile cilia beating. Cytosolic sensor for calcium, modulates the interaction of STIM1 and ORAI1 upon store depletion and the activation of store-operated Ca(2+) entry (SOCE) and NFAT translocation from cytosol to nucleus. This Bos taurus (Bovine) protein is EF-hand domain-containing family member B.